The sequence spans 58 residues: MDHRLLEIIACPVCNGKLSFNQEHQELVCKIDRLAFPLRDGIPVMLESEARPLPQEEN.

It belongs to the UPF0434 family.

In Edwardsiella ictaluri (strain 93-146), this protein is UPF0434 protein NT01EI_2448.